We begin with the raw amino-acid sequence, 445 residues long: MMMLITMKSTVLLSVFTVLATWAGLLEAHPLGDTSDASKLSSDYSLPDLINARKVPNNWQTGEQASLEEGRIVLTSKQNSKGSLWLKQGFDLKDSFTMEWTFRSVGYSGQTDGGISFWFVQDSNVPRDKQLYNGPVNYDGLQLLVDNNGPLGPTLRGQLNDGQKPVDKTKIYDQSFASCLMGYQDSSVPSTIRVTYDLEDDNLLKVQVDNKVCFQTRKVRFPSGSYRIGVTAQNGAVNNNAESFEIFKMQFFNGVIEDSLIPNVNAMGQPKLITKYIDQQTGKEKLIEKTAFDADKDKITNYELYKKLDRVEGKILANDINALETKLNDVIKVQQELLSFMTTITKQLSSKPPANNEKGTSTDDAIAEDKENFKDFLSINQKLEKVLVEQEKYREATKRHGQDGPQVDEIARKLMIWLLPLIFIMLVMAYYTFRIRQEIIKTKLL.

The first 28 residues, 1–28 (MMMLITMKSTVLLSVFTVLATWAGLLEA), serve as a signal peptide directing secretion. Residues 29-412 (HPLGDTSDAS…DGPQVDEIAR (384 aa)) lie on the Lumenal side of the membrane. One can recognise an L-type lectin-like domain in the interval 36–254 (DASKLSSDYS…EIFKMQFFNG (219 aa)). A disulfide bridge connects residues cysteine 179 and cysteine 213. A helical transmembrane segment spans residues 413-433 (KLMIWLLPLIFIMLVMAYYTF). The mediates the interactions with COPI and COPII coat complexes stretch occupies residues 430–433 (YYTF). At 434-445 (RIRQEIIKTKLL) the chain is on the cytoplasmic side. The short motif at 441 to 445 (KTKLL) is the Di-lysine motif element.

The protein belongs to the EMP46/EMP47 family. In terms of assembly, homooligomers. Interacts with EMP46 in the endoplasmic reticulum membrane. Interacts with the coatomer proteins COP1, SEC21 and SEC23.

Its subcellular location is the golgi apparatus membrane. It is found in the endoplasmic reticulum membrane. In terms of biological role, involved in the secretion of glycoproteins and in nucleus architecture and gene silencing. Required for the endoplasmic reticulum exit of EMP46. This chain is Protein EMP47 (EMP47), found in Saccharomyces cerevisiae (strain ATCC 204508 / S288c) (Baker's yeast).